Consider the following 367-residue polypeptide: GDP-perosamine synthase (367 aa).

The residue at position 181 (K181) is an N6-(pyridoxal phosphate)lysine.

Belongs to the DegT/DnrJ/EryC1 family. In terms of assembly, homotetramer. Pyridoxal 5'-phosphate is required as a cofactor.

The enzyme catalyses GDP-alpha-D-perosamine + 2-oxoglutarate = GDP-4-dehydro-alpha-D-rhamnose + L-glutamate. Its pathway is bacterial outer membrane biogenesis; LPS O-antigen biosynthesis. In terms of biological role, catalyzes the synthesis of GDP-perosamine from GDP-4-keto-6-deoxy-D-mannose and L-glutamate. Also shows weak activity with L-glutamine. The protein is GDP-perosamine synthase of Vibrio cholerae.